The sequence spans 350 residues: Blue-sensitive opsin (350 aa).

Over 1-36 the chain is Extracellular; sequence MNGTEGPNFYVPMSNATGVVRSPFEYPQYYLAEPWA. Residues Asn2 and Asn15 are each glycosylated (N-linked (GlcNAc...) asparagine). The helical transmembrane segment at 37 to 61 threads the bilayer; sequence FSILAAYMFFLIITGFPINFLTLYV. Topologically, residues 62–73 are cytoplasmic; it reads TIEHKKLRTPLN. The helical transmembrane segment at 74-98 threads the bilayer; that stretch reads YILLNLAVADLFMVFGGFTTTMYTS. The Extracellular segment spans residues 99–113; the sequence is MHGYFVFGETGCNLE. A disulfide bridge connects residues Cys110 and Cys187. Residues 114–133 form a helical membrane-spanning segment; sequence GYFATLGGEISLWSLVVLAI. Residues 134 to 152 lie on the Cytoplasmic side of the membrane; it reads ERWVVVCKPISNFRFGENH. Residues 153–176 traverse the membrane as a helical segment; that stretch reads AIMGLTLTWVMANACAMPPLFGWS. Residues 177–202 lie on the Extracellular side of the membrane; that stretch reads RYIPEGLQCSCGIDYYTLKPEVNNES. An N-linked (GlcNAc...) asparagine glycan is attached at Asn200. The helical transmembrane segment at 203-230 threads the bilayer; that stretch reads FVIYMFLVHFTIPLTIISFCYGRLVCAV. At 231 to 252 the chain is on the cytoplasmic side; the sequence is KEAAAQQQESETTQRAEREVTR. Residues 253–276 form a helical membrane-spanning segment; the sequence is MVVIMVISFLVCWIPYASVAWYIF. At 277–284 the chain is on the extracellular side; sequence THQGSTFG. The chain crosses the membrane as a helical span at residues 285–309; it reads PIFMTVPSFFAKSSSIYNPMIYICM. At Lys296 the chain carries N6-(retinylidene)lysine. The Cytoplasmic portion of the chain corresponds to 310 to 350; that stretch reads NKQFRNCMITTLFCGKNPFEGEEEGSTTKTEASAVSSVSPA. The tract at residues 330–350 is disordered; that stretch reads GEEEGSTTKTEASAVSSVSPA.

This sequence belongs to the G-protein coupled receptor 1 family. Opsin subfamily. In terms of processing, phosphorylated on some or all of the serine and threonine residues present in the C-terminal region. As to expression, rod shaped photoreceptor cells which mediates vision in dim light.

It is found in the membrane. In terms of biological role, visual pigments are the light-absorbing molecules that mediate vision. They consist of an apoprotein, opsin, covalently linked to cis-retinal. The protein is Blue-sensitive opsin of Conger conger (Conger eel).